A 377-amino-acid chain; its full sequence is Adenosine 3'-phospho 5'-phosphosulfate transporter 2 (377 aa).

The next 10 helical transmembrane spans lie at 50–70, 77–97, 115–135, 138–158, 164–184, 195–215, 228–248, 266–286, 293–313, and 317–337; these read LCCGGVFALYLVYGYMQELIF, PYGWYLTLVQFAYYTAFGYIE, ALLAFLTLGTMGLSNSSVGYL, PTQVIFKCCKLIPVLIGSVLI, GPMDFFAATAMCLGLILFTLA, FGVFLISLALLCDAAIGNVQE, VVIYSYGIGFVYLAVIMLLSG, GYAFLFSLTGYLGIQIVLTLV, LAATVTTARKAVTIALSFVFF, and FTIQYLWSGLIVVFGIYLNVY.

This sequence belongs to the nucleotide-sugar transporter family. SLC35B subfamily.

It is found in the golgi apparatus membrane. Mediates the transport of adenosine 3'-phospho 5'-phosphosulfate (PAPS), from cytosol into Golgi. PAPS is a universal sulfuryl donor for sulfation events that take place in the Golgi. Essential for viability. Involved in glycosaminoglycan synthesis and the subsequent signaling. May be involved in hh and dpp signaling by controlling the sulfation of heparan sulfate (HS). In Anopheles gambiae (African malaria mosquito), this protein is Adenosine 3'-phospho 5'-phosphosulfate transporter 2.